Here is a 124-residue protein sequence, read N- to C-terminus: NADH dehydrogenase [ubiquinone] iron-sulfur protein 6, mitochondrial (124 aa).

The transit peptide at 1–28 (MAAVLTFLRFLGRGGAVTRGLPGGARCF) directs the protein to the mitochondrion.

This sequence belongs to the complex I NDUFS6 subunit family. In terms of assembly, mammalian complex I is composed of 45 different subunits. This is a component of the iron-sulfur (IP) fragment of the enzyme.

Its subcellular location is the mitochondrion inner membrane. In terms of biological role, accessory subunit of the mitochondrial membrane respiratory chain NADH dehydrogenase (Complex I), that is believed not to be involved in catalysis. Complex I functions in the transfer of electrons from NADH to the respiratory chain. The immediate electron acceptor for the enzyme is believed to be ubiquinone. This Bos taurus (Bovine) protein is NADH dehydrogenase [ubiquinone] iron-sulfur protein 6, mitochondrial (NDUFS6).